Reading from the N-terminus, the 167-residue chain is Ubiquitin-fold modifier-conjugating enzyme 1 (167 aa).

Cys116 functions as the Glycyl thioester intermediate in the catalytic mechanism.

Belongs to the ubiquitin-conjugating enzyme family. UFC1 subfamily. In terms of assembly, interacts with UBA5 (via C-terminus). Interacts with UFL1. Interacts with UFM1.

Functionally, E2-like enzyme which specifically catalyzes the second step in ufmylation. Accepts the ubiquitin-like modifier UFM1 from the E1 enzyme UBA5 and forms an intermediate with UFM1 via a thioester linkage. Ufmylation is involved in various processes, such as ribosome recycling, response to DNA damage, interferon response or reticulophagy (also called ER-phagy). This chain is Ubiquitin-fold modifier-conjugating enzyme 1, found in Esox lucius (Northern pike).